A 200-amino-acid polypeptide reads, in one-letter code: Protein GrpE (200 aa).

Basic and acidic residues predominate over residues 1–12 (MSNEEIKNKDEQ). The segment at 1–30 (MSNEEIKNKDEQLQQDAVETEAEVVGTDAD) is disordered.

Belongs to the GrpE family. In terms of assembly, homodimer.

It localises to the cytoplasm. Functionally, participates actively in the response to hyperosmotic and heat shock by preventing the aggregation of stress-denatured proteins, in association with DnaK and GrpE. It is the nucleotide exchange factor for DnaK and may function as a thermosensor. Unfolded proteins bind initially to DnaJ; upon interaction with the DnaJ-bound protein, DnaK hydrolyzes its bound ATP, resulting in the formation of a stable complex. GrpE releases ADP from DnaK; ATP binding to DnaK triggers the release of the substrate protein, thus completing the reaction cycle. Several rounds of ATP-dependent interactions between DnaJ, DnaK and GrpE are required for fully efficient folding. This chain is Protein GrpE, found in Vibrio cholerae serotype O1 (strain ATCC 39315 / El Tor Inaba N16961).